We begin with the raw amino-acid sequence, 290 residues long: Fructose-1,6-bisphosphatase class 1 (290 aa).

Mg(2+) is bound by residues Glu-78, Asp-96, Leu-98, and Asp-99. Substrate-binding positions include 99-102 (DGSS), Tyr-201, and Lys-226. A Mg(2+)-binding site is contributed by Glu-232.

This sequence belongs to the FBPase class 1 family. In terms of assembly, homotetramer. It depends on Mg(2+) as a cofactor.

The protein resides in the cytoplasm. It carries out the reaction beta-D-fructose 1,6-bisphosphate + H2O = beta-D-fructose 6-phosphate + phosphate. It functions in the pathway carbohydrate biosynthesis; gluconeogenesis. This is Fructose-1,6-bisphosphatase class 1 from Helicobacter pylori (strain J99 / ATCC 700824) (Campylobacter pylori J99).